A 98-amino-acid polypeptide reads, in one-letter code: Small ribosomal subunit protein bS18 (98 aa).

Belongs to the bacterial ribosomal protein bS18 family. In terms of assembly, part of the 30S ribosomal subunit. Forms a tight heterodimer with protein bS6.

Its function is as follows. Binds as a heterodimer with protein bS6 to the central domain of the 16S rRNA, where it helps stabilize the platform of the 30S subunit. This Flavobacterium psychrophilum (strain ATCC 49511 / DSM 21280 / CIP 103535 / JIP02/86) protein is Small ribosomal subunit protein bS18.